Here is a 65-residue protein sequence, read N- to C-terminus: Large ribosomal subunit protein bL35 (65 aa).

The protein belongs to the bacterial ribosomal protein bL35 family.

This chain is Large ribosomal subunit protein bL35, found in Prochlorococcus marinus (strain MIT 9301).